The chain runs to 319 residues: Probable NAD(P)H-dependent D-xylose reductase xyl1 (319 aa).

Tyr-50 serves as the catalytic Proton donor. His-112 contacts substrate. NAD(+)-binding positions include 166–167, 215–224, and 271–281; these read SN, SSFGPLSFLE, and KSNNPARLLQN.

This sequence belongs to the aldo/keto reductase family.

The catalysed reaction is xylitol + NAD(+) = D-xylose + NADH + H(+). It carries out the reaction xylitol + NADP(+) = D-xylose + NADPH + H(+). The protein operates within carbohydrate metabolism; D-xylose degradation. Functionally, catalyzes the initial reaction in the xylose utilization pathway by reducing D-xylose into xylitol. Xylose is a major component of hemicelluloses such as xylan. Most fungi utilize D-xylose via three enzymatic reactions, xylose reductase (XR), xylitol dehydrogenase (XDH), and xylulokinase, to form xylulose 5-phosphate, which enters pentose phosphate pathway. In Emericella nidulans (strain FGSC A4 / ATCC 38163 / CBS 112.46 / NRRL 194 / M139) (Aspergillus nidulans), this protein is Probable NAD(P)H-dependent D-xylose reductase xyl1 (xyl1).